The sequence spans 72 residues: Translation initiation factor IF-1 (72 aa).

One can recognise an S1-like domain in the interval 1–72 (MAKEELLEFP…TKGRITYRFK (72 aa)).

This sequence belongs to the IF-1 family. As to quaternary structure, component of the 30S ribosomal translation pre-initiation complex which assembles on the 30S ribosome in the order IF-2 and IF-3, IF-1 and N-formylmethionyl-tRNA(fMet); mRNA recruitment can occur at any time during PIC assembly.

The protein resides in the cytoplasm. One of the essential components for the initiation of protein synthesis. Stabilizes the binding of IF-2 and IF-3 on the 30S subunit to which N-formylmethionyl-tRNA(fMet) subsequently binds. Helps modulate mRNA selection, yielding the 30S pre-initiation complex (PIC). Upon addition of the 50S ribosomal subunit IF-1, IF-2 and IF-3 are released leaving the mature 70S translation initiation complex. In Caulobacter vibrioides (strain ATCC 19089 / CIP 103742 / CB 15) (Caulobacter crescentus), this protein is Translation initiation factor IF-1.